A 378-amino-acid chain; its full sequence is Phosphoserine aminotransferase (378 aa).

Arg53 provides a ligand contact to L-glutamate. Pyridoxal 5'-phosphate contacts are provided by Trp117, Thr167, Asp190, and Gln213. Lys214 carries the post-translational modification N6-(pyridoxal phosphate)lysine. Asn255 to Thr256 lines the pyridoxal 5'-phosphate pocket.

It belongs to the class-V pyridoxal-phosphate-dependent aminotransferase family. SerC subfamily. In terms of assembly, homodimer. Pyridoxal 5'-phosphate is required as a cofactor.

It is found in the cytoplasm. It carries out the reaction O-phospho-L-serine + 2-oxoglutarate = 3-phosphooxypyruvate + L-glutamate. The enzyme catalyses 4-(phosphooxy)-L-threonine + 2-oxoglutarate = (R)-3-hydroxy-2-oxo-4-phosphooxybutanoate + L-glutamate. It functions in the pathway amino-acid biosynthesis; L-serine biosynthesis; L-serine from 3-phospho-D-glycerate: step 2/3. The protein operates within cofactor biosynthesis; pyridoxine 5'-phosphate biosynthesis; pyridoxine 5'-phosphate from D-erythrose 4-phosphate: step 3/5. In terms of biological role, catalyzes the reversible conversion of 3-phosphohydroxypyruvate to phosphoserine and of 3-hydroxy-2-oxo-4-phosphonooxybutanoate to phosphohydroxythreonine. This Ralstonia nicotianae (strain ATCC BAA-1114 / GMI1000) (Ralstonia solanacearum) protein is Phosphoserine aminotransferase.